The sequence spans 101 residues: Replication restart protein PriB (101 aa).

The region spanning 1–101 (MTTNNLVLAG…LHAENVELKT (101 aa)) is the SSB domain.

It belongs to the PriB family. As to quaternary structure, homodimer. Interacts with PriA and DnaT. Component of the replication restart primosome. Primosome assembly occurs via a 'hand-off' mechanism. PriA binds to replication forks, subsequently PriB then DnaT bind; DnaT then displaces ssDNA to generate the helicase loading substrate.

In terms of biological role, involved in the restart of stalled replication forks, which reloads the replicative helicase on sites other than the origin of replication; the PriA-PriB pathway is the major replication restart pathway. During primosome assembly it facilitates complex formation between PriA and DnaT on DNA; stabilizes PriA on DNA. Stimulates the DNA unwinding activity of PriA helicase. This Shewanella halifaxensis (strain HAW-EB4) protein is Replication restart protein PriB.